A 326-amino-acid chain; its full sequence is Ribose-phosphate pyrophosphokinase 4 (326 aa).

Mg(2+) contacts are provided by D140, H142, H151, and D155.

Belongs to the ribose-phosphate pyrophosphokinase family.

Its subcellular location is the cytoplasm. It carries out the reaction D-ribose 5-phosphate + ATP = 5-phospho-alpha-D-ribose 1-diphosphate + AMP + H(+). It participates in metabolic intermediate biosynthesis; 5-phospho-alpha-D-ribose 1-diphosphate biosynthesis; 5-phospho-alpha-D-ribose 1-diphosphate from D-ribose 5-phosphate (route I): step 1/1. In terms of biological role, 5-phosphoribose 1-diphosphate synthase involved in nucleotide, histidine, and tryptophan biosynthesis. Active in heteromultimeric complexes with other 5-phosphoribose 1-diphosphate synthases (PRS2, PRS3, PRS4 and PRS5). The sequence is that of Ribose-phosphate pyrophosphokinase 4 (PRS4) from Saccharomyces cerevisiae (strain ATCC 204508 / S288c) (Baker's yeast).